The following is a 478-amino-acid chain: Aspartyl/glutamyl-tRNA(Asn/Gln) amidotransferase subunit B (478 aa).

This sequence belongs to the GatB/GatE family. GatB subfamily. In terms of assembly, heterotrimer of A, B and C subunits.

The enzyme catalyses L-glutamyl-tRNA(Gln) + L-glutamine + ATP + H2O = L-glutaminyl-tRNA(Gln) + L-glutamate + ADP + phosphate + H(+). The catalysed reaction is L-aspartyl-tRNA(Asn) + L-glutamine + ATP + H2O = L-asparaginyl-tRNA(Asn) + L-glutamate + ADP + phosphate + 2 H(+). Functionally, allows the formation of correctly charged Asn-tRNA(Asn) or Gln-tRNA(Gln) through the transamidation of misacylated Asp-tRNA(Asn) or Glu-tRNA(Gln) in organisms which lack either or both of asparaginyl-tRNA or glutaminyl-tRNA synthetases. The reaction takes place in the presence of glutamine and ATP through an activated phospho-Asp-tRNA(Asn) or phospho-Glu-tRNA(Gln). This chain is Aspartyl/glutamyl-tRNA(Asn/Gln) amidotransferase subunit B, found in Pseudothermotoga lettingae (strain ATCC BAA-301 / DSM 14385 / NBRC 107922 / TMO) (Thermotoga lettingae).